The primary structure comprises 200 residues: LexA repressor (200 aa).

Catalysis depends on for autocatalytic cleavage activity residues serine 121 and lysine 158.

It belongs to the peptidase S24 family. Homodimer.

It catalyses the reaction Hydrolysis of Ala-|-Gly bond in repressor LexA.. Binds a consensus sequence 5'-TGTTC-N(4)-GAACA-3'; some genes have a tandem consensus sequence and their binding is cooperative. Binds to the promoters of a number of genes, including lexA and splB. Represses a number of genes involved in the response to DNA damage (SOS response). This is LexA repressor from Opitutus terrae (strain DSM 11246 / JCM 15787 / PB90-1).